The following is a 387-amino-acid chain: Bifunctional chorismate mutase/prephenate dehydratase (387 aa).

A Chorismate mutase domain is found at 1 to 92 (MNPDNPLLAL…DSVLTQQALL (92 aa)). Positions 11, 28, 39, 48, 52, 84, and 88 each coordinate substrate. The Prephenate dehydratase domain occupies 105-285 (RIAFLGPKGS…NHTRFIVLAR (181 aa)). In terms of domain architecture, ACT spans 299–376 (TLIMATGQQA…RSLKVLGCYP (78 aa)).

The protein localises to the cytoplasm. The enzyme catalyses chorismate = prephenate. It carries out the reaction prephenate + H(+) = 3-phenylpyruvate + CO2 + H2O. Its pathway is amino-acid biosynthesis; L-phenylalanine biosynthesis; phenylpyruvate from prephenate: step 1/1. The protein operates within metabolic intermediate biosynthesis; prephenate biosynthesis; prephenate from chorismate: step 1/1. Catalyzes the Claisen rearrangement of chorismate to prephenate and the decarboxylation/dehydration of prephenate to phenylpyruvate. In Enterobacter agglomerans (Erwinia herbicola), this protein is Bifunctional chorismate mutase/prephenate dehydratase (pheA).